Reading from the N-terminus, the 175-residue chain is Shikimate kinase (175 aa).

14 to 19 contacts ATP; the sequence is GAGKST. Mg(2+) is bound at residue serine 18. 3 residues coordinate substrate: aspartate 36, arginine 60, and glycine 82. Residue arginine 120 coordinates ATP. A substrate-binding site is contributed by arginine 140. An ATP-binding site is contributed by glutamine 157.

Belongs to the shikimate kinase family. Monomer. The cofactor is Mg(2+).

The protein resides in the cytoplasm. It carries out the reaction shikimate + ATP = 3-phosphoshikimate + ADP + H(+). It functions in the pathway metabolic intermediate biosynthesis; chorismate biosynthesis; chorismate from D-erythrose 4-phosphate and phosphoenolpyruvate: step 5/7. Catalyzes the specific phosphorylation of the 3-hydroxyl group of shikimic acid using ATP as a cosubstrate. The protein is Shikimate kinase of Actinobacillus succinogenes (strain ATCC 55618 / DSM 22257 / CCUG 43843 / 130Z).